A 551-amino-acid polypeptide reads, in one-letter code: CTP synthase (551 aa).

The amidoligase domain stretch occupies residues Met1–Trp267. A CTP-binding site is contributed by Ser13. A UTP-binding site is contributed by Ser13. Ser14–Ile19 is an ATP binding site. Residue Tyr54 coordinates L-glutamine. Asp71 contacts ATP. Mg(2+)-binding residues include Asp71 and Glu141. Residues Asp148–Glu150, Lys188–Gln193, and Lys224 each bind CTP. Residues Lys188 to Gln193 and Lys224 contribute to the UTP site. Positions Arg292–Glu532 constitute a Glutamine amidotransferase type-1 domain. Gly353 contributes to the L-glutamine binding site. Catalysis depends on Cys380, which acts as the Nucleophile; for glutamine hydrolysis. L-glutamine-binding positions include Tyr381–His384, Glu404, and Arg460. Active-site residues include His505 and Glu507.

The protein belongs to the CTP synthase family. In terms of assembly, homotetramer.

It catalyses the reaction UTP + L-glutamine + ATP + H2O = CTP + L-glutamate + ADP + phosphate + 2 H(+). The catalysed reaction is L-glutamine + H2O = L-glutamate + NH4(+). It carries out the reaction UTP + NH4(+) + ATP = CTP + ADP + phosphate + 2 H(+). Its pathway is pyrimidine metabolism; CTP biosynthesis via de novo pathway; CTP from UDP: step 2/2. Allosterically activated by GTP, when glutamine is the substrate; GTP has no effect on the reaction when ammonia is the substrate. The allosteric effector GTP functions by stabilizing the protein conformation that binds the tetrahedral intermediate(s) formed during glutamine hydrolysis. Inhibited by the product CTP, via allosteric rather than competitive inhibition. Functionally, catalyzes the ATP-dependent amination of UTP to CTP with either L-glutamine or ammonia as the source of nitrogen. Regulates intracellular CTP levels through interactions with the four ribonucleotide triphosphates. This chain is CTP synthase, found in Thermomicrobium roseum (strain ATCC 27502 / DSM 5159 / P-2).